Consider the following 36-residue polypeptide: DNA binding protein ORF8 (36 aa).

Belongs to the microviridae J protein family.

Its subcellular location is the virion. The protein localises to the host cytoplasm. In terms of biological role, mediates ssDNA packaging into virion, it locates to the internal surface of the capsid. Additionally, plays a role in viral attachment to the host cell. The chain is DNA binding protein ORF8 from Chlamydia phage 1 (Bacteriophage Chp1).